We begin with the raw amino-acid sequence, 290 residues long: Programmed cell death 1 ligand 1 (290 aa).

The first 18 residues, 1–18, serve as a signal peptide directing secretion; it reads MRIFAGIIFTACCHLLRA. One can recognise an Ig-like V-type domain in the interval 19–127; the sequence is FTITAPKDLY…YGGADYKRIT (109 aa). At 19–239 the chain is on the extracellular side; the sequence is FTITAPKDLY…ATHPPQNRTH (221 aa). Residue N35 is glycosylated (N-linked (GlcNAc...) asparagine). Cystine bridges form between C40–C114 and C154–C208. Positions 133-224 constitute an Ig-like C2-type domain; that stretch reads PYRKINQRIS…PGQNHTAELI (92 aa). Residues N191, N199, N218, and N236 are each glycosylated (N-linked (GlcNAc...) asparagine). The helical transmembrane segment at 240–260 threads the bilayer; that stretch reads WVLLGSILLFLIVVSTVLLFL. Residues 261–290 lie on the Cytoplasmic side of the membrane; that stretch reads RKQVRMLDVEKCGVEDTSSKNRNDTQFEET.

The protein belongs to the immunoglobulin superfamily. BTN/MOG family. In terms of assembly, interacts with PDCD1. Interacts with CMTM4 and CMTM6. Interacts with CD80. In terms of processing, ubiquitinated; STUB1 likely mediates polyubiquitination of PD-L1/CD274 triggering its degradation. Ubiquitinated by MARCHF8; leading to degradation. Deubiquitinated by USP22; leading to stabilization. Highly expressed in the heart, thymus, skeletal muscle, and lung. Weakly expressed in the kidney, spleen, thyroid, and liver. Expressed on activated dendritic cells, B-cells and macrophages. Expressed in numerous tumor cells lines of lymphoid origin.

It is found in the cell membrane. It localises to the early endosome membrane. The protein localises to the recycling endosome membrane. In terms of biological role, plays a critical role in induction and maintenance of immune tolerance to self. As a ligand for the inhibitory receptor PDCD1/PD-1, modulates the activation threshold of T-cells and limits T-cell effector response. Through a yet unknown activating receptor, may costimulate T-cell subsets that predominantly produce interleukin-10 (IL10). Functionally, the PDCD1-mediated inhibitory pathway is exploited by tumors to attenuate anti-tumor immunity and escape destruction by the immune system, thereby facilitating tumor survival. The interaction with PDCD1/PD-1 inhibits cytotoxic T lymphocytes (CTLs) effector function. The blockage of the PDCD1-mediated pathway results in the reversal of the exhausted T-cell phenotype and the normalization of the anti-tumor response, providing a rationale for cancer immunotherapy. In Mus musculus (Mouse), this protein is Programmed cell death 1 ligand 1 (Cd274).